We begin with the raw amino-acid sequence, 1109 residues long: Protein translocase subunit SecA (1109 aa).

Residues Gln175, 193-197, and Asp695 contribute to the ATP site; that span reads GEGKT. The segment at 1038 to 1109 is disordered; that stretch reads VRQAAPEQRQ…KYKNCHGRNS (72 aa). Composition is skewed to basic and acidic residues over residues 1045-1059 and 1071-1088; these read QRQDMSKYREQKQDL and DTREAVKREPIRAEKTVG. Zn(2+) is bound by residues Cys1093, Cys1095, Cys1104, and His1105. Residues 1099 to 1109 show a composition bias toward basic residues; it reads KKYKNCHGRNS.

The protein belongs to the SecA family. As to quaternary structure, monomer and homodimer. Part of the essential Sec protein translocation apparatus which comprises SecA, SecYEG and auxiliary proteins SecDF. Other proteins may also be involved. Requires Zn(2+) as cofactor.

The protein localises to the cell inner membrane. The protein resides in the cytoplasm. It carries out the reaction ATP + H2O + cellular proteinSide 1 = ADP + phosphate + cellular proteinSide 2.. In terms of biological role, part of the Sec protein translocase complex. Interacts with the SecYEG preprotein conducting channel. Has a central role in coupling the hydrolysis of ATP to the transfer of proteins into and across the cell membrane, serving as an ATP-driven molecular motor driving the stepwise translocation of polypeptide chains across the membrane. The chain is Protein translocase subunit SecA from Bacteroides fragilis (strain ATCC 25285 / DSM 2151 / CCUG 4856 / JCM 11019 / LMG 10263 / NCTC 9343 / Onslow / VPI 2553 / EN-2).